Here is a 420-residue protein sequence, read N- to C-terminus: G2/mitotic-specific cyclin-A (420 aa).

The segment at 64-93 (VQGSRIQPTRAAKEKLKPPQNISDSQLVND) is disordered. The segment covering 83–93 (QNISDSQLVND) has biased composition (polar residues).

It belongs to the cyclin family. Cyclin AB subfamily.

Essential for the control of the cell cycle at the G2/M (mitosis) transition. Interacts with the CDC2 and CDK2 protein kinases to form MPF. G2/M cyclins accumulate steadily during G2 and are abruptly destroyed at mitosis. The protein is G2/mitotic-specific cyclin-A of Hydra viridissima (Green hydra).